Here is a 431-residue protein sequence, read N- to C-terminus: Adenylosuccinate synthetase (431 aa).

GTP-binding positions include 13 to 19 (GDEGKGK) and 41 to 43 (GHT). D14 acts as the Proton acceptor in catalysis. Mg(2+)-binding residues include D14 and G41. Residues 14–17 (DEGK), 39–42 (NAGH), T130, R144, Q225, T240, and R304 each bind IMP. H42 acts as the Proton donor in catalysis. 300-306 (ATTGRER) serves as a coordination point for substrate. GTP is bound by residues R306, 332–334 (KLD), and 415–417 (STG).

The protein belongs to the adenylosuccinate synthetase family. As to quaternary structure, homodimer. Mg(2+) is required as a cofactor.

It is found in the cytoplasm. The enzyme catalyses IMP + L-aspartate + GTP = N(6)-(1,2-dicarboxyethyl)-AMP + GDP + phosphate + 2 H(+). The protein operates within purine metabolism; AMP biosynthesis via de novo pathway; AMP from IMP: step 1/2. Plays an important role in the de novo pathway of purine nucleotide biosynthesis. Catalyzes the first committed step in the biosynthesis of AMP from IMP. This is Adenylosuccinate synthetase from Colwellia psychrerythraea (strain 34H / ATCC BAA-681) (Vibrio psychroerythus).